The following is a 474-amino-acid chain: mRNA cap guanine-N(7) methyltransferase (474 aa).

A compositionally biased stretch (polar residues) spans 1 to 12; that stretch reads MSTDSYTPSQEP. A disordered region spans residues 1 to 106; the sequence is MSTDSYTPSQ…GHEGDEGDED (106 aa). Positions 56–100 are enriched in basic and acidic residues; sequence SDIDGKYDKYGERRNAHTTTRDSRLDRLKRVRQKSAEREDVGHEG. Residues 170–474 form the mRNA cap 0 methyltransferase domain; sequence SPIYKMRNFN…FYIGFVFEKV (305 aa). 179–180 is a binding site for mRNA; the sequence is NN. S-adenosyl-L-methionine is bound by residues Lys-183, Cys-207, Asp-229, Asp-269, Gln-299, and Tyr-304.

This sequence belongs to the class I-like SAM-binding methyltransferase superfamily. mRNA cap 0 methyltransferase family.

It is found in the nucleus. The catalysed reaction is a 5'-end (5'-triphosphoguanosine)-ribonucleoside in mRNA + S-adenosyl-L-methionine = a 5'-end (N(7)-methyl 5'-triphosphoguanosine)-ribonucleoside in mRNA + S-adenosyl-L-homocysteine. Functionally, responsible for methylating the 5'-cap structure of mRNAs. In Candida albicans (strain SC5314 / ATCC MYA-2876) (Yeast), this protein is mRNA cap guanine-N(7) methyltransferase (ABD1).